The following is a 184-amino-acid chain: Elongation factor P (184 aa).

It belongs to the elongation factor P family.

Its subcellular location is the cytoplasm. It participates in protein biosynthesis; polypeptide chain elongation. Its function is as follows. Involved in peptide bond synthesis. Stimulates efficient translation and peptide-bond synthesis on native or reconstituted 70S ribosomes in vitro. Probably functions indirectly by altering the affinity of the ribosome for aminoacyl-tRNA, thus increasing their reactivity as acceptors for peptidyl transferase. The polypeptide is Elongation factor P (Acidovorax ebreus (strain TPSY) (Diaphorobacter sp. (strain TPSY))).